Here is a 149-residue protein sequence, read N- to C-terminus: Arginine repressor (149 aa).

The protein belongs to the ArgR family.

The protein resides in the cytoplasm. It participates in amino-acid biosynthesis; L-arginine biosynthesis [regulation]. In terms of biological role, regulates arginine biosynthesis genes. The sequence is that of Arginine repressor from Alkaliphilus metalliredigens (strain QYMF).